Reading from the N-terminus, the 466-residue chain is MLRRGGSASTLRRSRTSNLLLHSFPYRWDVTECAGAREKILIYGLGRSGRGVARFLAREGVRAEWHDAHPTAEDEALMQELGFLRGDPGGTYRTVVAAPGVPIDHADLLALSAGGAEIIGEVTLAARLRPHLPLVGVTGTAGKGGTTVLIAHLLRAQGLSALEGGNIDPPLLDVVDQAEVAVVELSSFQLERVPGLRLPVAVITNLGVDHLDRHRTVEAYHAAKLNITAGQEAEDVLVVPAGLEVRTRAQLRPFQPERLSLADGRELLPVADLPEGIHPANAAAAVLAAEALLTRLGRPVEPERLAAGLRSARPVAGRFETVARIGNVRFIEDSIATRTLAVEAALTRAVPPIAWLVGGRDKGADLVPLRAAAQGRVRRVIAFGEDGEKLARALGLPFETVPGTDGDTVMQAATRAGLEALGGPGGAGTVLLAPIGTSFDLFRDYKARGASFTRAARALVAGEVRA.

139–145 (GTAGKGG) lines the ATP pocket.

This sequence belongs to the MurCDEF family.

The protein localises to the cytoplasm. The catalysed reaction is UDP-N-acetyl-alpha-D-muramoyl-L-alanine + D-glutamate + ATP = UDP-N-acetyl-alpha-D-muramoyl-L-alanyl-D-glutamate + ADP + phosphate + H(+). The protein operates within cell wall biogenesis; peptidoglycan biosynthesis. In terms of biological role, cell wall formation. Catalyzes the addition of glutamate to the nucleotide precursor UDP-N-acetylmuramoyl-L-alanine (UMA). This chain is UDP-N-acetylmuramoylalanine--D-glutamate ligase, found in Deinococcus geothermalis (strain DSM 11300 / CIP 105573 / AG-3a).